A 2280-amino-acid chain; its full sequence is Protein Ycf2 (2280 aa).

ATP is bound at residue 1631–1638; the sequence is GSIGTGRS.

This sequence belongs to the Ycf2 family.

It localises to the plastid. Its subcellular location is the chloroplast stroma. Functionally, probable ATPase of unknown function. Its presence in a non-photosynthetic plant (Epifagus virginiana) and experiments in tobacco indicate that it has an essential function which is probably not related to photosynthesis. The protein is Protein Ycf2 of Nicotiana tomentosiformis (Tobacco).